The following is a 342-amino-acid chain: Heparan sulfate glucosamine 3-O-sulfotransferase 6 (342 aa).

The Cytoplasmic portion of the chain corresponds to 1-31 (MAGSGGLGGGAGDLQGAGTGQGTALRALRAP). A helical; Signal-anchor for type II membrane protein transmembrane segment spans residues 32-49 (LALVVLLLSAYCLFALPG). Topologically, residues 50 to 342 (RCPPAARAPA…QMTGQDFGWD (293 aa)) are lumenal. The tract at residues 56–75 (RAPAPVPAPAEPPHTSLRLR) is disordered. 100 to 104 (KGGTR) contacts 3'-phosphoadenylyl sulfate. Residues 122 to 128 (EPHFFDR) and 153 to 156 (KTPS) contribute to the substrate site. The 3'-phosphoadenylyl sulfate site is built by Arg-181 and Ser-189. 220 to 221 (WS) contacts substrate. A glycan (N-linked (GlcNAc...) asparagine) is linked at Asn-281. Cys-288 and Cys-300 are oxidised to a cystine. 305-309 (KGRPH) serves as a coordination point for 3'-phosphoadenylyl sulfate.

Belongs to the sulfotransferase 1 family. In terms of tissue distribution, expressed in liver and kidney, followed by heart, brain, lung and testis.

The protein resides in the golgi apparatus membrane. It carries out the reaction alpha-D-glucosaminyl-[heparan sulfate](n) + 3'-phosphoadenylyl sulfate = 3-sulfo-alpha-D-glucosaminyl-[heparan sulfate](n) + adenosine 3',5'-bisphosphate + H(+). In terms of biological role, sulfotransferase that utilizes 3'-phospho-5'-adenylyl sulfate (PAPS) to catalyze the transfer of a sulfo group to heparan sulfate. Unlike 3-OST-1, does not convert non-anticoagulant heparan sulfate to anticoagulant heparan sulfate. This is Heparan sulfate glucosamine 3-O-sulfotransferase 6 (Hs3st6) from Mus musculus (Mouse).